The primary structure comprises 169 residues: Peptide methionine sulfoxide reductase MsrA (169 aa).

Cys-10 is a catalytic residue.

Belongs to the MsrA Met sulfoxide reductase family.

The enzyme catalyses L-methionyl-[protein] + [thioredoxin]-disulfide + H2O = L-methionyl-(S)-S-oxide-[protein] + [thioredoxin]-dithiol. It catalyses the reaction [thioredoxin]-disulfide + L-methionine + H2O = L-methionine (S)-S-oxide + [thioredoxin]-dithiol. Has an important function as a repair enzyme for proteins that have been inactivated by oxidation. Catalyzes the reversible oxidation-reduction of methionine sulfoxide in proteins to methionine. The protein is Peptide methionine sulfoxide reductase MsrA of Streptococcus equi subsp. zooepidemicus (strain MGCS10565).